The chain runs to 558 residues: Dihydroxy-acid dehydratase (558 aa).

D78 is a binding site for Mg(2+). Residue C119 coordinates [2Fe-2S] cluster. 2 residues coordinate Mg(2+): D120 and K121. Residue K121 is modified to N6-carboxylysine. C192 serves as a coordination point for [2Fe-2S] cluster. E445 lines the Mg(2+) pocket. S471 functions as the Proton acceptor in the catalytic mechanism.

This sequence belongs to the IlvD/Edd family. Homodimer. The cofactor is [2Fe-2S] cluster. Mg(2+) is required as a cofactor.

It catalyses the reaction (2R)-2,3-dihydroxy-3-methylbutanoate = 3-methyl-2-oxobutanoate + H2O. It carries out the reaction (2R,3R)-2,3-dihydroxy-3-methylpentanoate = (S)-3-methyl-2-oxopentanoate + H2O. It participates in amino-acid biosynthesis; L-isoleucine biosynthesis; L-isoleucine from 2-oxobutanoate: step 3/4. It functions in the pathway amino-acid biosynthesis; L-valine biosynthesis; L-valine from pyruvate: step 3/4. Functions in the biosynthesis of branched-chain amino acids. Catalyzes the dehydration of (2R,3R)-2,3-dihydroxy-3-methylpentanoate (2,3-dihydroxy-3-methylvalerate) into 2-oxo-3-methylpentanoate (2-oxo-3-methylvalerate) and of (2R)-2,3-dihydroxy-3-methylbutanoate (2,3-dihydroxyisovalerate) into 2-oxo-3-methylbutanoate (2-oxoisovalerate), the penultimate precursor to L-isoleucine and L-valine, respectively. The polypeptide is Dihydroxy-acid dehydratase (Akkermansia muciniphila (strain ATCC BAA-835 / DSM 22959 / JCM 33894 / BCRC 81048 / CCUG 64013 / CIP 107961 / Muc)).